The primary structure comprises 355 residues: UDP-N-acetylglucosamine--N-acetylmuramyl-(pentapeptide) pyrophosphoryl-undecaprenol N-acetylglucosamine transferase (355 aa).

Residues Thr-15–Gly-17, Asn-127, Arg-163, Ser-191, Ile-244, Ala-263–Glu-268, and Gln-288 contribute to the UDP-N-acetyl-alpha-D-glucosamine site.

Belongs to the glycosyltransferase 28 family. MurG subfamily.

The protein resides in the cell inner membrane. It carries out the reaction di-trans,octa-cis-undecaprenyl diphospho-N-acetyl-alpha-D-muramoyl-L-alanyl-D-glutamyl-meso-2,6-diaminopimeloyl-D-alanyl-D-alanine + UDP-N-acetyl-alpha-D-glucosamine = di-trans,octa-cis-undecaprenyl diphospho-[N-acetyl-alpha-D-glucosaminyl-(1-&gt;4)]-N-acetyl-alpha-D-muramoyl-L-alanyl-D-glutamyl-meso-2,6-diaminopimeloyl-D-alanyl-D-alanine + UDP + H(+). It functions in the pathway cell wall biogenesis; peptidoglycan biosynthesis. Functionally, cell wall formation. Catalyzes the transfer of a GlcNAc subunit on undecaprenyl-pyrophosphoryl-MurNAc-pentapeptide (lipid intermediate I) to form undecaprenyl-pyrophosphoryl-MurNAc-(pentapeptide)GlcNAc (lipid intermediate II). The chain is UDP-N-acetylglucosamine--N-acetylmuramyl-(pentapeptide) pyrophosphoryl-undecaprenol N-acetylglucosamine transferase from Escherichia coli (strain K12 / MC4100 / BW2952).